We begin with the raw amino-acid sequence, 109 residues long: Putative transporter-like protein YIL171W (109 aa).

Positions 1 to 22 (MSGVNNTSANDLSTTESNSNSA) are enriched in polar residues. The tract at residues 1–40 (MSGVNNTSANDLSTTESNSNSAVGAPSVKTEHGDSKDSLN) is disordered. Residues 1–56 (MSGVNNTSANDLSTTESNSNSAVGAPSVKTEHGDSKDSLNLDATEAPIDLPQKPLS) lie on the Cytoplasmic side of the membrane. Positions 29–39 (KTEHGDSKDSL) are enriched in basic and acidic residues. The chain crosses the membrane as a helical span at residues 57-77 (AYTTVAILCLMIAFGGFIFGW). Topologically, residues 78–109 (DTGTISGFVNLSDFIRRFGQKKTTRGLTTYRK) are extracellular. N87 carries N-linked (GlcNAc...) asparagine glycosylation.

Belongs to the major facilitator superfamily. Sugar transporter (TC 2.A.1.1) family.

Its subcellular location is the cell membrane. Its function is as follows. Probable glucose transporter. This chain is Putative transporter-like protein YIL171W, found in Saccharomyces cerevisiae (strain ATCC 204508 / S288c) (Baker's yeast).